Here is a 389-residue protein sequence, read N- to C-terminus: Chalcone synthase (389 aa).

Residue cysteine 164 is part of the active site.

Belongs to the thiolase-like superfamily. Chalcone/stilbene synthases family.

The catalysed reaction is (E)-4-coumaroyl-CoA + 3 malonyl-CoA + 3 H(+) = 2',4,4',6'-tetrahydroxychalcone + 3 CO2 + 4 CoA. The protein operates within secondary metabolite biosynthesis; flavonoid biosynthesis. In terms of biological role, the primary product of this enzyme is 4,2',4',6'-tetrahydroxychalcone (also termed naringenin-chalcone or chalcone) which can under specific conditions spontaneously isomerize into naringenin. This Hydrangea macrophylla (Bigleaf hydrangea) protein is Chalcone synthase (CHS).